A 236-amino-acid polypeptide reads, in one-letter code: V-set and transmembrane domain-containing protein 2A (236 aa).

Positions 1–24 (MMGIFLVYVGFVFFSVLYVQQGLS) are cleaved as a signal peptide. An Ig-like V-type domain is found at 27–143 (AKFTEFPRNV…YGELQEHKAQ (117 aa)). N-linked (GlcNAc...) asparagine glycosylation is present at N35. C48 and C127 form a disulfide bridge. N-linked (GlcNAc...) asparagine glycosylation occurs at N175. Polar residues predominate over residues 184–199 (IHGSANQRTHSTSSPQ). The interval 184–206 (IHGSANQRTHSTSSPQVVAKIPK) is disordered.

As to quaternary structure, homodimer. Post-translationally, N-glycosylated. N-linked glycosylation is critical for secretion but not for preadipocyte cell differentiation activity.

The protein localises to the secreted. In terms of biological role, plays a role in the regulation of the early stage of white and brown preadipocyte cell differentiation. Promotes adipogenic commitment of preadipocytes by increasing gene expression of the transcription factor PPARG in a BMP4-dependent signaling pathway. The sequence is that of V-set and transmembrane domain-containing protein 2A from Homo sapiens (Human).